A 659-amino-acid polypeptide reads, in one-letter code: Zeaxanthin epoxidase, chloroplastic (659 aa).

The N-terminal 50 residues, 1 to 50 (MALLSATAPAKTRFSLFSHEEAQHPHPHALSACCGGGASGKRQRARARVA), are a transit peptide targeting the chloroplast. Residues 79–107 (RVLVAGGGIGGLVLALAARRKGYEVTVFE) and 357–370 (TFNWGKGRVTLLGD) contribute to the FAD site. The FHA domain occupies 553–607 (LSIGSRSDPSNSTASLALPLPQISENHATITCKNKAFYVTDNGSEHGTWITDNEG).

It depends on FAD as a cofactor. In terms of tissue distribution, expressed in young microspores.

The protein resides in the plastid. Its subcellular location is the chloroplast membrane. The protein localises to the chloroplast thylakoid membrane. It catalyses the reaction all-trans-zeaxanthin + 4 reduced [2Fe-2S]-[ferredoxin] + 2 O2 + 4 H(+) = all-trans-violaxanthin + 4 oxidized [2Fe-2S]-[ferredoxin] + 2 H2O. Its pathway is plant hormone biosynthesis; abscisate biosynthesis. Its function is as follows. Zeaxanthin epoxidase that plays an important role in the xanthophyll cycle and abscisic acid (ABA) biosynthesis. Converts zeaxanthin into antheraxanthin and subsequently violaxanthin. Required for resistance to osmotic and drought stresses, seed development and dormancy. The polypeptide is Zeaxanthin epoxidase, chloroplastic (ZEP) (Oryza sativa subsp. japonica (Rice)).